The following is a 570-amino-acid chain: Dual specificity testis-specific protein kinase 2 (570 aa).

The 256-residue stretch at 58–313 (DFTREKIGSG…EIGKTLEEIM (256 aa)) folds into the Protein kinase domain. Residues 64-72 (IGSGFFSEV) and Lys-87 contribute to the ATP site. The active-site Proton acceptor is Asp-176. Position 219 is a phosphoserine; by autocatalysis (Ser-219). Residues Ser-369, Ser-456, and Ser-460 each carry the phosphoserine modification. The interval 513–570 (DCSNPQEENGFVPRPKGTSPCSGAASEEMEVEEERPRRAPVHFSISGISLQTQGEQDG) is disordered. A compositionally biased stretch (polar residues) spans 558–570 (SGISLQTQGEQDG).

The protein belongs to the protein kinase superfamily. TKL Ser/Thr protein kinase family. Requires Mg(2+) as cofactor. The cofactor is Mn(2+). Predominantly expressed in testis and prostate. Found predominantly in non-germinal Sertoli cells.

It localises to the nucleus. The catalysed reaction is L-seryl-[protein] + ATP = O-phospho-L-seryl-[protein] + ADP + H(+). The enzyme catalyses L-threonyl-[protein] + ATP = O-phospho-L-threonyl-[protein] + ADP + H(+). It catalyses the reaction L-tyrosyl-[protein] + ATP = O-phospho-L-tyrosyl-[protein] + ADP + H(+). Its activity is regulated as follows. Activated by autophosphorylation on Ser-219. Functionally, dual specificity protein kinase activity catalyzing autophosphorylation and phosphorylation of exogenous substrates on both serine/threonine and tyrosine residues. Phosphorylates cofilin at 'Ser-3'. May play an important role in spermatogenesis. This chain is Dual specificity testis-specific protein kinase 2 (Tesk2), found in Rattus norvegicus (Rat).